Here is a 294-residue protein sequence, read N- to C-terminus: Metallophosphoesterase MPPED2 (294 aa).

Mn(2+) is bound by residues Asp-65, His-67, Asp-86, Asn-117, and His-213. Residue 117 to 118 (NH) coordinates GMP. GMP contacts are provided by residues 225 to 226 (KE) and 252 to 255 (GIHE). Position 254 (His-254) interacts with Mn(2+).

The protein belongs to the UPF0046 family. In terms of assembly, homodimer. Mn(2+) is required as a cofactor. Requires Co(2+) as cofactor. As to expression, expressed predominantly in fetal brain.

Its activity is regulated as follows. Inhibited by nmolar levels of AMP and GMP. Displays low metallophosphoesterase activity (in vitro). May play a role in the development of the nervous system. The protein is Metallophosphoesterase MPPED2 (MPPED2) of Homo sapiens (Human).